The following is a 470-amino-acid chain: Protein nucleotidyltransferase YdiU (470 aa).

Positions 86, 88, 89, 109, 121, 122, 172, and 179 each coordinate ATP. The Proton acceptor role is filled by aspartate 244. Mg(2+)-binding residues include asparagine 245 and aspartate 254. Aspartate 254 is an ATP binding site.

It belongs to the SELO family. The cofactor is Mg(2+). Mn(2+) is required as a cofactor.

The enzyme catalyses L-seryl-[protein] + ATP = 3-O-(5'-adenylyl)-L-seryl-[protein] + diphosphate. It catalyses the reaction L-threonyl-[protein] + ATP = 3-O-(5'-adenylyl)-L-threonyl-[protein] + diphosphate. The catalysed reaction is L-tyrosyl-[protein] + ATP = O-(5'-adenylyl)-L-tyrosyl-[protein] + diphosphate. It carries out the reaction L-histidyl-[protein] + UTP = N(tele)-(5'-uridylyl)-L-histidyl-[protein] + diphosphate. The enzyme catalyses L-seryl-[protein] + UTP = O-(5'-uridylyl)-L-seryl-[protein] + diphosphate. It catalyses the reaction L-tyrosyl-[protein] + UTP = O-(5'-uridylyl)-L-tyrosyl-[protein] + diphosphate. Functionally, nucleotidyltransferase involved in the post-translational modification of proteins. It can catalyze the addition of adenosine monophosphate (AMP) or uridine monophosphate (UMP) to a protein, resulting in modifications known as AMPylation and UMPylation. The polypeptide is Protein nucleotidyltransferase YdiU (Roseobacter denitrificans (strain ATCC 33942 / OCh 114) (Erythrobacter sp. (strain OCh 114))).